The chain runs to 174 residues: Guided entry of tail-anchored proteins factor 1 (174 aa).

At 1–8 (MSAAEADR) the chain is on the lumenal side. The helical transmembrane segment at 9 to 29 (WAWLLVLSFVFGCNVLRILLP) threads the bilayer. The Cytoplasmic segment spans residues 30-99 (SFSFFMSRVL…VKARTAQLAK (70 aa)). Residues 39–94 (LQKDAEQESQMRAEIQGMKQELSTVNMMDEFARYARLERKINKMTDKLKTHVKART) are a coiled coil. Residues 39–97 (LQKDAEQESQMRAEIQGMKQELSTVNMMDEFARYARLERKINKMTDKLKTHVKARTAQL) are interaction with GET3/TRC40. Residues 100–120 (IKWVISVAFYILQAALMVSLI) form a helical membrane-spanning segment. The Lumenal segment spans residues 121-148 (WKYYSVPVAVVPSKWITPLDRLVAFPTR). Residues 149–169 (VAGGVGITCWILVCNKVVAIV) form a helical membrane-spanning segment. The Cytoplasmic portion of the chain corresponds to 170–174 (LHPFS).

Belongs to the WRB/GET1 family. In terms of assembly, component of the Golgi to ER traffic (GET) complex, which is composed of GET1/WRB, CAMLG/GET2 and GET3. Within the complex, GET1 and CAMLG form a heterotetramer which is stabilized by phosphatidylinositol binding and which binds to the GET3 homodimer. Interacts with CAMLG (via C-terminus). GET3 shows a higher affinity for CAMLG than for GET1.

Its subcellular location is the endoplasmic reticulum membrane. Required for the post-translational delivery of tail-anchored (TA) proteins to the endoplasmic reticulum. Together with CAMLG/GET2, acts as a membrane receptor for soluble GET3/TRC40, which recognizes and selectively binds the transmembrane domain of TA proteins in the cytosol. Required to ensure correct topology and ER insertion of CAMLG. The polypeptide is Guided entry of tail-anchored proteins factor 1 (Bos taurus (Bovine)).